A 231-amino-acid polypeptide reads, in one-letter code: Large ribosomal subunit protein uL1 (231 aa).

This sequence belongs to the universal ribosomal protein uL1 family. In terms of assembly, part of the 50S ribosomal subunit.

Binds directly to 23S rRNA. The L1 stalk is quite mobile in the ribosome, and is involved in E site tRNA release. In terms of biological role, protein L1 is also a translational repressor protein, it controls the translation of the L11 operon by binding to its mRNA. The sequence is that of Large ribosomal subunit protein uL1 from Alkalilimnicola ehrlichii (strain ATCC BAA-1101 / DSM 17681 / MLHE-1).